We begin with the raw amino-acid sequence, 361 residues long: Anthranilate phosphoribosyltransferase (361 aa).

5-phospho-alpha-D-ribose 1-diphosphate is bound by residues glycine 101, 104-105 (GD), threonine 109, 111-114 (NIST), 129-137 (KHGNRGVSS), and serine 141. Glycine 101 contributes to the anthranilate binding site. Mg(2+) is bound at residue serine 113. Position 132 (asparagine 132) interacts with anthranilate. Arginine 187 lines the anthranilate pocket. Mg(2+) is bound by residues aspartate 245 and glutamate 246.

Belongs to the anthranilate phosphoribosyltransferase family. Homodimer. The cofactor is Mg(2+).

It catalyses the reaction N-(5-phospho-beta-D-ribosyl)anthranilate + diphosphate = 5-phospho-alpha-D-ribose 1-diphosphate + anthranilate. It participates in amino-acid biosynthesis; L-tryptophan biosynthesis; L-tryptophan from chorismate: step 2/5. Its function is as follows. Catalyzes the transfer of the phosphoribosyl group of 5-phosphorylribose-1-pyrophosphate (PRPP) to anthranilate to yield N-(5'-phosphoribosyl)-anthranilate (PRA). This Shewanella denitrificans (strain OS217 / ATCC BAA-1090 / DSM 15013) protein is Anthranilate phosphoribosyltransferase.